The primary structure comprises 298 residues: ADP/ATP translocase 2 (298 aa).

Methionine 1 bears the N-acetylmethionine mark. The Mitochondrial intermembrane portion of the chain corresponds to 1–7 (MTDAAVS). Position 2 is an N-acetylthreonine; in ADP/ATP translocase 2, N-terminally processed (threonine 2). The Solcar 1 repeat unit spans residues 6–98 (VSFAKDFLAG…FAFKDKYKQI (93 aa)). Serine 7 carries the phosphoserine modification. A helical membrane pass occupies residues 8–37 (FAKDFLAGGVAAAISKTAVAPIERVKLLLQ). Lysine 23 is subject to N6-malonyllysine. At 38-74 (VQHASKQITADKQYKGIMDCVVRIPKEQGVLSFWRGN) the chain is on the mitochondrial matrix side. Lysine 43 carries the N6-succinyllysine modification. Lysine 52 carries the N6,N6,N6-trimethyllysine; alternate modification. Position 52 is an N6,N6-dimethyllysine; alternate (lysine 52). Lysine 52 is subject to N6-methyllysine; alternate. Residues 75–99 (LANVIRYFPTQALNFAFKDKYKQIF) traverse the membrane as a helical segment. Positions 80 and 92 each coordinate ADP. An N6-malonyllysine mark is found at lysine 92 and lysine 96. Residues 100 to 109 (LGGVDKRTQF) lie on the Mitochondrial intermembrane side of the membrane. N6-acetyllysine; alternate is present on lysine 105. An N6-succinyllysine; alternate modification is found at lysine 105. The helical transmembrane segment at 110-130 (WRYFAGNLASGGAAGATSLCF) threads the bilayer. Solcar repeat units follow at residues 111–201 (RYFA…AKGM) and 212–297 (ISWM…IKKY). Topologically, residues 131–178 (VYPLDFARTRLAADVGKAGDAREFKGLGDCLVKITKSDGIRGLYQGFN) are mitochondrial matrix. Lysine 147 is subject to N6-methyllysine; alternate. N6-acetyllysine; alternate is present on residues lysine 147 and lysine 155. Residues lysine 147 and lysine 155 each carry the N6-succinyllysine; alternate modification. Lysine 147 carries the post-translational modification N6-malonyllysine; alternate. Lysine 163 and lysine 166 each carry N6-acetyllysine. The helical transmembrane segment at 179–199 (VSVQGIIIYRAAYFGIYDTAK) threads the bilayer. Over 200–210 (GMLPDPKNTHI) the chain is Mitochondrial intermembrane. A helical membrane pass occupies residues 211–231 (FISWMIAQSVTAVAGLTSYPF). Over 232–273 (DTVRRRMMMQSGRKGSDIMYTGTIDCWKKIARDEGSKAFFKG) the chain is Mitochondrial matrix. Arginine 235 provides a ligand contact to ADP. Residues 235–240 (RRRMMM) form an important for transport activity region. Positions 235–240 (RRRMMM) match the Nucleotide carrier signature motif motif. Lysine 268 bears the N6-acetyllysine; alternate mark. Lysine 268 is modified (N6-succinyllysine; alternate). A helical membrane pass occupies residues 274-291 (AWSNVLRGMGGAFVLVLY). At 292–298 (DEIKKYT) the chain is on the mitochondrial intermembrane side.

The protein belongs to the mitochondrial carrier (TC 2.A.29) family. As to quaternary structure, monomer. Component of the MMXD complex, which includes CIAO1, ERCC2, CIAO2B, MMS19 and SLC25A5/ANT2. Interacts with AK4. Interacts with TIMM44; leading to inhibit the presequence translocase TIMM23, thereby promoting stabilization of PINK1. Trimethylated by ANTKMT at Lys-52.

It is found in the mitochondrion inner membrane. It localises to the membrane. The catalysed reaction is ADP(in) + ATP(out) = ADP(out) + ATP(in). It catalyses the reaction H(+)(in) = H(+)(out). Its activity is regulated as follows. The matrix-open state (m-state) is inhibited by the membrane-permeable bongkrekic acid (BKA). The cytoplasmic-open state (c-state) is inhibited by the membrane-impermeable toxic inhibitor carboxyatractyloside (CATR). Proton transporter activity is inhibited by ADP:ATP antiporter activity. ADP:ATP antiporter that mediates import of ADP into the mitochondrial matrix for ATP synthesis, and export of ATP out to fuel the cell. Cycles between the cytoplasmic-open state (c-state) and the matrix-open state (m-state): operates by the alternating access mechanism with a single substrate-binding site intermittently exposed to either the cytosolic (c-state) or matrix (m-state) side of the inner mitochondrial membrane. In addition to its ADP:ATP antiporter activity, also involved in mitochondrial uncoupling and mitochondrial permeability transition pore (mPTP) activity. Plays a role in mitochondrial uncoupling by acting as a proton transporter: proton transport uncouples the proton flows via the electron transport chain and ATP synthase to reduce the efficiency of ATP production and cause mitochondrial thermogenesis. Proton transporter activity is inhibited by ADP:ATP antiporter activity, suggesting that SLC25A5/ANT2 acts as a master regulator of mitochondrial energy output by maintaining a delicate balance between ATP production (ADP:ATP antiporter activity) and thermogenesis (proton transporter activity). Proton transporter activity requires free fatty acids as cofactor, but does not transport it. Probably mediates mitochondrial uncoupling in tissues that do not express UCP1. Also plays a key role in mPTP opening, a non-specific pore that enables free passage of the mitochondrial membranes to solutes of up to 1.5 kDa, and which contributes to cell death. It is however unclear if SLC25A5/ANT2 constitutes a pore-forming component of mPTP or regulates it. Acts as a regulator of mitophagy independently of ADP:ATP antiporter activity: promotes mitophagy via interaction with TIMM44, leading to inhibit the presequence translocase TIMM23, thereby promoting stabilization of PINK1. As part of the mitotic spindle-associated MMXD complex it may play a role in chromosome segregation. The protein is ADP/ATP translocase 2 of Tachyglossus aculeatus aculeatus (Southeast Australian short-beaked echidna).